The primary structure comprises 359 residues: Pyruvate dehydrogenase E1 component subunit beta, mitochondrial (359 aa).

The N-terminal 30 residues, Met1–Ala30, are a transit peptide targeting the mitochondrion. At Tyr67 the chain carries Phosphotyrosine. Glu89 contacts thiamine diphosphate. Residues Ile142, Ala190, Ile191, Asp193, and Asn195 each contribute to the K(+) site. An N6-acetyllysine modification is found at Lys354.

Heterotetramer of two PDHA1 and two PDHB subunits. The heterotetramer interacts with DLAT, and is part of the multimeric pyruvate dehydrogenase complex that contains multiple copies of pyruvate dehydrogenase (E1), dihydrolipoamide acetyltransferase (DLAT, E2) and lipoamide dehydrogenase (DLD, E3). These subunits are bound to an inner core composed of about 48 DLAT and 12 PDHX molecules. Interacts with DLAT. Requires thiamine diphosphate as cofactor.

Its subcellular location is the mitochondrion matrix. The catalysed reaction is N(6)-[(R)-lipoyl]-L-lysyl-[protein] + pyruvate + H(+) = N(6)-[(R)-S(8)-acetyldihydrolipoyl]-L-lysyl-[protein] + CO2. In terms of biological role, the pyruvate dehydrogenase complex catalyzes the overall conversion of pyruvate to acetyl-CoA and CO(2), and thereby links the glycolytic pathway to the tricarboxylic cycle. This chain is Pyruvate dehydrogenase E1 component subunit beta, mitochondrial (PDHB), found in Homo sapiens (Human).